Consider the following 265-residue polypeptide: MIKWPWKVQESAHQTALPWQEALSIPLLTGLTEQEQSKLVTLAERFLQQKRLVPLQGFELDSLRSCRIALLFCLPVLELGLEWLDGFHEVLIYPAPFVVDDEWEDDIGLVHNQRIVQSGQSWQQGPIVLNWLDIQDSFDASGFNLIIHEVAHKLDTRNGDRASGVPFIPLREVAGWEHDLHAAMNNIQEEIELVGENAASIDAYAASDPAECFAVLSEYFFSAPELFAPRFPSLWQRFCQFYQQDPLQRLHHANDTDSFSATNVH.

Zn(2+) contacts are provided by histidine 111, histidine 148, histidine 152, and glutamate 211.

The protein belongs to the MtfA family. Interacts with Mlc. Zn(2+) is required as a cofactor.

It localises to the cytoplasm. Its function is as follows. Involved in the modulation of the activity of the glucose-phosphotransferase system (glucose-PTS). Interacts with the transcriptional repressor Mlc, preventing its interaction with DNA and leading to the modulation of expression of genes regulated by Mlc, including ptsG, which encodes the PTS system glucose-specific EIICB component. In terms of biological role, shows zinc-dependent metallopeptidase activity. This chain is Mlc titration factor A, found in Shigella sonnei (strain Ss046).